Reading from the N-terminus, the 300-residue chain is UDP-N-acetylenolpyruvoylglucosamine reductase (300 aa).

Residues 29–193 (TGGPADLLVF…LSATFKLRSG (165 aa)) enclose the FAD-binding PCMH-type domain. The active site involves Arg-172. Catalysis depends on Ser-222, which acts as the Proton donor. The active site involves Glu-292.

The protein belongs to the MurB family. It depends on FAD as a cofactor.

The protein resides in the cytoplasm. It catalyses the reaction UDP-N-acetyl-alpha-D-muramate + NADP(+) = UDP-N-acetyl-3-O-(1-carboxyvinyl)-alpha-D-glucosamine + NADPH + H(+). The protein operates within cell wall biogenesis; peptidoglycan biosynthesis. Its function is as follows. Cell wall formation. The protein is UDP-N-acetylenolpyruvoylglucosamine reductase of Pediococcus pentosaceus (strain ATCC 25745 / CCUG 21536 / LMG 10740 / 183-1w).